Reading from the N-terminus, the 133-residue chain is Profilin-1 (133 aa).

It belongs to the profilin family. In terms of assembly, occurs in many kinds of cells as a complex with monomeric actin in a 1:1 ratio. In terms of tissue distribution, ubiquitous.

The protein localises to the cytoplasm. It localises to the cytoskeleton. In terms of biological role, binds to actin and affects the structure of the cytoskeleton. At high concentrations, profilin prevents the polymerization of actin, whereas it enhances it at low concentrations. By binding to PIP2, it inhibits the formation of IP3 and DG. The chain is Profilin-1 (PRO1) from Solanum lycopersicum (Tomato).